Consider the following 396-residue polypeptide: MSTLKLNPYFGEYGGMYVPQILVPALKQLETAFVEAQEDDDFKAEFTDLLKNYAGRPTALTLTRNLSPNPMVKIYLKREDLLHGGAHKTNQVLGQALLAKRMGKKEIIAETGAGQHGVATALACALLGLKCKVYMGAKDVARQSPNVFRMRLMGAEVIPVTSGSATLKDACNEAMRDWSGSYEKAHYLLGTAAGPHPFPTIVREFQRIIGEETKKQMLEREGRLPDAVIACVGGGSNAIGMFADFIDEPSVELIGVEPAGKGIDTPMHGAPLKHGKTGIFFGMKAPLMQDSEGQIEESYSISAGLDFPSVGPQHAHLNATGRARYESATDDEALEAFQQLARCEGIIPALESAHAIAYAVKMARECTKETILVVNLSGRGDKDIFTVSDILNGKEV.

Residue Lys-88 is modified to N6-(pyridoxal phosphate)lysine.

It belongs to the TrpB family. As to quaternary structure, tetramer of two alpha and two beta chains. It depends on pyridoxal 5'-phosphate as a cofactor.

The enzyme catalyses (1S,2R)-1-C-(indol-3-yl)glycerol 3-phosphate + L-serine = D-glyceraldehyde 3-phosphate + L-tryptophan + H2O. Its pathway is amino-acid biosynthesis; L-tryptophan biosynthesis; L-tryptophan from chorismate: step 5/5. Its function is as follows. The beta subunit is responsible for the synthesis of L-tryptophan from indole and L-serine. In Shewanella sp. (strain W3-18-1), this protein is Tryptophan synthase beta chain.